The chain runs to 701 residues: Elongation factor G (701 aa).

Residues 6-286 enclose the tr-type G domain; sequence KFTRNIGIAA…YVMELLPSPL (281 aa). GTP is bound by residues 15-22, 83-87, and 137-140; these read AHIDAGKT, DTPGH, and NKMD.

It belongs to the TRAFAC class translation factor GTPase superfamily. Classic translation factor GTPase family. EF-G/EF-2 subfamily.

Its subcellular location is the cytoplasm. Functionally, catalyzes the GTP-dependent ribosomal translocation step during translation elongation. During this step, the ribosome changes from the pre-translocational (PRE) to the post-translocational (POST) state as the newly formed A-site-bound peptidyl-tRNA and P-site-bound deacylated tRNA move to the P and E sites, respectively. Catalyzes the coordinated movement of the two tRNA molecules, the mRNA and conformational changes in the ribosome. The sequence is that of Elongation factor G from Cytophaga hutchinsonii (strain ATCC 33406 / DSM 1761 / CIP 103989 / NBRC 15051 / NCIMB 9469 / D465).